Reading from the N-terminus, the 498-residue chain is ATP synthase subunit beta, chloroplastic (498 aa).

Residue 172–179 (GGAGVGKT) participates in ATP binding.

This sequence belongs to the ATPase alpha/beta chains family. F-type ATPases have 2 components, CF(1) - the catalytic core - and CF(0) - the membrane proton channel. CF(1) has five subunits: alpha(3), beta(3), gamma(1), delta(1), epsilon(1). CF(0) has four main subunits: a(1), b(1), b'(1) and c(9-12).

Its subcellular location is the plastid. It is found in the chloroplast thylakoid membrane. It carries out the reaction ATP + H2O + 4 H(+)(in) = ADP + phosphate + 5 H(+)(out). Functionally, produces ATP from ADP in the presence of a proton gradient across the membrane. The catalytic sites are hosted primarily by the beta subunits. The protein is ATP synthase subunit beta, chloroplastic of Solanum tuberosum (Potato).